We begin with the raw amino-acid sequence, 292 residues long: Ribosomal protein L11 methyltransferase (292 aa).

S-adenosyl-L-methionine contacts are provided by T144, G165, D187, and N229.

The protein belongs to the methyltransferase superfamily. PrmA family.

It is found in the cytoplasm. It carries out the reaction L-lysyl-[protein] + 3 S-adenosyl-L-methionine = N(6),N(6),N(6)-trimethyl-L-lysyl-[protein] + 3 S-adenosyl-L-homocysteine + 3 H(+). Functionally, methylates ribosomal protein L11. The protein is Ribosomal protein L11 methyltransferase of Ectopseudomonas mendocina (strain ymp) (Pseudomonas mendocina).